Reading from the N-terminus, the 1002-residue chain is Lon protease homolog, mitochondrial (1002 aa).

Residues 102–313 (VIALPLPHRP…LTLELVKKEM (212 aa)) form the Lon N-terminal domain. Position 468-475 (468-475 (GPPGVGKT)) interacts with ATP. A Lon proteolytic domain is found at 811-995 (QTPVGVVMGL…NEIFDIAFQS (185 aa)). Residues serine 901 and lysine 944 contribute to the active site.

The protein belongs to the peptidase S16 family. As to quaternary structure, homohexamer or homoheptamer. Organized in a ring with a central cavity.

The protein resides in the mitochondrion matrix. It catalyses the reaction Hydrolysis of proteins in presence of ATP.. Functionally, ATP-dependent serine protease that mediates the selective degradation of misfolded, unassembled or oxidatively damaged polypeptides as well as certain short-lived regulatory proteins in the mitochondrial matrix. May also have a chaperone function in the assembly of inner membrane protein complexes. Participates in the regulation of mitochondrial gene expression and in the maintenance of the integrity of the mitochondrial genome. Binds to mitochondrial DNA in a site-specific manner. This Oryza sativa subsp. indica (Rice) protein is Lon protease homolog, mitochondrial.